The chain runs to 641 residues: Phosphomethylpyrimidine synthase (641 aa).

Residues N221, M250, Y279, H315, 335–337 (SRG), 376–379 (DGLR), and E415 each bind substrate. H419 contacts Zn(2+). Residue Y442 coordinates substrate. H483 is a Zn(2+) binding site. [4Fe-4S] cluster contacts are provided by C563, C566, and C571.

It belongs to the ThiC family. As to quaternary structure, homodimer. [4Fe-4S] cluster serves as cofactor.

The enzyme catalyses 5-amino-1-(5-phospho-beta-D-ribosyl)imidazole + S-adenosyl-L-methionine = 4-amino-2-methyl-5-(phosphooxymethyl)pyrimidine + CO + 5'-deoxyadenosine + formate + L-methionine + 3 H(+). It functions in the pathway cofactor biosynthesis; thiamine diphosphate biosynthesis. Catalyzes the synthesis of the hydroxymethylpyrimidine phosphate (HMP-P) moiety of thiamine from aminoimidazole ribotide (AIR) in a radical S-adenosyl-L-methionine (SAM)-dependent reaction. This is Phosphomethylpyrimidine synthase from Rhodopseudomonas palustris (strain BisA53).